Here is a 338-residue protein sequence, read N- to C-terminus: Ketol-acid reductoisomerase (NADP(+)) (338 aa).

The 181-residue stretch at 1-181 (MKVYYDKDAD…GGTKGGVIET (181 aa)) folds into the KARI N-terminal Rossmann domain. NADP(+)-binding positions include 24-27 (YGSQ), Arg47, Ser52, and 82-85 (DESQ). His107 is a catalytic residue. Gly133 is an NADP(+) binding site. The 146-residue stretch at 182–327 (NFREETETDL…AELRAMMPWI (146 aa)) folds into the KARI C-terminal knotted domain. The Mg(2+) site is built by Asp190, Glu194, Glu226, and Glu230. Ser251 lines the substrate pocket.

It belongs to the ketol-acid reductoisomerase family. It depends on Mg(2+) as a cofactor.

The catalysed reaction is (2R)-2,3-dihydroxy-3-methylbutanoate + NADP(+) = (2S)-2-acetolactate + NADPH + H(+). It catalyses the reaction (2R,3R)-2,3-dihydroxy-3-methylpentanoate + NADP(+) = (S)-2-ethyl-2-hydroxy-3-oxobutanoate + NADPH + H(+). It participates in amino-acid biosynthesis; L-isoleucine biosynthesis; L-isoleucine from 2-oxobutanoate: step 2/4. It functions in the pathway amino-acid biosynthesis; L-valine biosynthesis; L-valine from pyruvate: step 2/4. In terms of biological role, involved in the biosynthesis of branched-chain amino acids (BCAA). Catalyzes an alkyl-migration followed by a ketol-acid reduction of (S)-2-acetolactate (S2AL) to yield (R)-2,3-dihydroxy-isovalerate. In the isomerase reaction, S2AL is rearranged via a Mg-dependent methyl migration to produce 3-hydroxy-3-methyl-2-ketobutyrate (HMKB). In the reductase reaction, this 2-ketoacid undergoes a metal-dependent reduction by NADPH to yield (R)-2,3-dihydroxy-isovalerate. This is Ketol-acid reductoisomerase (NADP(+)) from Chromobacterium violaceum (strain ATCC 12472 / DSM 30191 / JCM 1249 / CCUG 213 / NBRC 12614 / NCIMB 9131 / NCTC 9757 / MK).